A 1043-amino-acid chain; its full sequence is Beta-klotho (1043 aa).

Residues 1-994 are Extracellular-facing; the sequence is MKTGCAAGSP…ICSFLVEKKP (994 aa). Glycosyl hydrolase-1 regions lie at residues 77-506 and 515-965; these read LYDT…DNGF and MKGR…SSGL. Residues Asn-84, Asn-122, Asn-161, Asn-211, Asn-262, Asn-308, Asn-389, Asn-552, Asn-609, Asn-700, Asn-704, and Asn-837 are each glycosylated (N-linked (GlcNAc...) asparagine). The helical transmembrane segment at 995 to 1015 threads the bilayer; sequence LIFFGCCFISTLAVLLSITVF. The Cytoplasmic segment spans residues 1016 to 1043; that stretch reads HHQKRRKFQKARNLQNIPLKKGHSRVFS.

Belongs to the glycosyl hydrolase 1 family. Klotho subfamily. As to quaternary structure, interacts with FGF19; this interaction is direct. Interacts (via C-terminus) with FGF21; this interaction is direct. Interacts with FGFR1 and FGFR4. Present in liver, muscle and white adipose tissue, but not in kidney (at protein level). Expressed in liver and pancreas, and at lower levels in skin, stomach, skeletal muscle, small intestine and lung.

The protein localises to the cell membrane. Contributes to the transcriptional repression of cholesterol 7-alpha-hydroxylase (CYP7A1), the rate-limiting enzyme in bile acid synthesis. Probably inactive as a glycosidase. Increases the ability of FGFR1 and FGFR4 to bind FGF21. The polypeptide is Beta-klotho (Klb) (Mus musculus (Mouse)).